The chain runs to 361 residues: Alanine racemase (361 aa).

Lys34 serves as the catalytic Proton acceptor; specific for D-alanine. At Lys34 the chain carries N6-(pyridoxal phosphate)lysine. Position 129 (Arg129) interacts with substrate. The active-site Proton acceptor; specific for L-alanine is the Tyr256. Met304 contacts substrate.

Belongs to the alanine racemase family. Requires pyridoxal 5'-phosphate as cofactor.

It carries out the reaction L-alanine = D-alanine. It participates in amino-acid biosynthesis; D-alanine biosynthesis; D-alanine from L-alanine: step 1/1. Catalyzes the interconversion of L-alanine and D-alanine. May also act on other amino acids. The sequence is that of Alanine racemase (alr) from Corynebacterium glutamicum (strain R).